Consider the following 370-residue polypeptide: Putative agmatine deiminase (370 aa).

Catalysis depends on Cys-361, which acts as the Amidino-cysteine intermediate.

This sequence belongs to the agmatine deiminase family.

The enzyme catalyses agmatine + H2O = N-carbamoylputrescine + NH4(+). The protein is Putative agmatine deiminase of Shewanella baltica (strain OS155 / ATCC BAA-1091).